Reading from the N-terminus, the 570-residue chain is Formate--tetrahydrofolate ligase (570 aa).

T65–T72 is a binding site for ATP.

The protein belongs to the formate--tetrahydrofolate ligase family.

The enzyme catalyses (6S)-5,6,7,8-tetrahydrofolate + formate + ATP = (6R)-10-formyltetrahydrofolate + ADP + phosphate. It participates in one-carbon metabolism; tetrahydrofolate interconversion. The protein is Formate--tetrahydrofolate ligase of Shewanella piezotolerans (strain WP3 / JCM 13877).